A 299-amino-acid chain; its full sequence is Regucalcin (299 aa).

E18 is an a divalent metal cation binding site. Substrate is bound by residues R101, N103, and E121. A divalent metal cation is bound by residues N154 and D204. The active-site Proton donor/acceptor is the D204. An N6-succinyllysine mark is found at K244 and K253.

Belongs to the SMP-30/CGR1 family. As to quaternary structure, monomer. Zn(2+) is required as a cofactor. The cofactor is Mn(2+). Ca(2+) serves as cofactor. It depends on Mg(2+) as a cofactor.

The protein localises to the cytoplasm. It carries out the reaction D-glucono-1,5-lactone + H2O = D-gluconate + H(+). The protein operates within cofactor biosynthesis; L-ascorbate biosynthesis via UDP-alpha-D-glucuronate pathway; L-ascorbate from UDP-alpha-D-glucuronate: step 3/4. In terms of biological role, gluconolactonase with low activity towards other sugar lactones, including gulonolactone and galactonolactone. Catalyzes a key step in ascorbic acid (vitamin C) biosynthesis. Can also hydrolyze diisopropyl phosphorofluoridate and phenylacetate (in vitro). Calcium-binding protein. Modulates Ca(2+) signaling, and Ca(2+)-dependent cellular processes and enzyme activities. In Bos taurus (Bovine), this protein is Regucalcin (RGN).